Here is a 701-residue protein sequence, read N- to C-terminus: Elongation factor G (701 aa).

One can recognise a tr-type G domain in the interval 8 to 291 (SRYRNIGIVA…AVIDYLPAPI (284 aa)). Residues 17–24 (AHVDAGKT), 89–93 (DTPGH), and 143–146 (NKMD) each bind GTP.

It belongs to the TRAFAC class translation factor GTPase superfamily. Classic translation factor GTPase family. EF-G/EF-2 subfamily.

The protein localises to the cytoplasm. In terms of biological role, catalyzes the GTP-dependent ribosomal translocation step during translation elongation. During this step, the ribosome changes from the pre-translocational (PRE) to the post-translocational (POST) state as the newly formed A-site-bound peptidyl-tRNA and P-site-bound deacylated tRNA move to the P and E sites, respectively. Catalyzes the coordinated movement of the two tRNA molecules, the mRNA and conformational changes in the ribosome. The sequence is that of Elongation factor G from Pseudomonas syringae pv. tomato (strain ATCC BAA-871 / DC3000).